The sequence spans 227 residues: Cytidylate kinase (227 aa).

Residue 12–20 (GPSGAGKGT) participates in ATP binding.

It belongs to the cytidylate kinase family. Type 1 subfamily.

Its subcellular location is the cytoplasm. The catalysed reaction is CMP + ATP = CDP + ADP. The enzyme catalyses dCMP + ATP = dCDP + ADP. In Salmonella arizonae (strain ATCC BAA-731 / CDC346-86 / RSK2980), this protein is Cytidylate kinase.